The following is a 212-amino-acid chain: MKKVILFTYVIIFLVFLSGYSVVTKNIVHNIKNNYKNNVCSMKVMHLWFKIINLFSKKYNVDKKLITAIICVESSGNTHAVSISKAIGLMQIKPFSAGREVYRFRGLLNQPSDVDLYDPKINIDIGTSYINILRNKILSGIKNSEILLYATIISYAHGASKLLKSFSYNKTLAIKKINKMKIKEFLDYIHNKYSEKKAWDYLSKVMYVYHLV.

The protein belongs to the transglycosylase Slt family.

It catalyses the reaction Exolytic cleavage of the (1-&gt;4)-beta-glycosidic linkage between N-acetylmuramic acid (MurNAc) and N-acetylglucosamine (GlcNAc) residues in peptidoglycan, from either the reducing or the non-reducing ends of the peptidoglycan chains, with concomitant formation of a 1,6-anhydrobond in the MurNAc residue.. In terms of biological role, murein-degrading enzyme. May play a role in recycling of muropeptides during cell elongation and/or cell division. The protein is Membrane-bound lytic murein transglycosylase E (mltE) of Buchnera aphidicola subsp. Baizongia pistaciae (strain Bp).